A 523-amino-acid chain; its full sequence is Putative pentatricopeptide repeat-containing protein At3g15200 (523 aa).

PPR repeat units follow at residues 142 to 172 (SSMLYNEILDVLGKMRRFEEFHQVFDEMSKR), 177 to 211 (NEKTYEVLLNRYAAAHKVDEAVGVFERRKEFGIDD), 212 to 242 (DLVAFHGLLMWLCRYKHVEFAETLFCSRRRE), 246 to 280 (DIKAMNMILNGWCVLGNVHEAKRFWKDIIASKCRP), 281 to 315 (DVVSYGTMINALTKKGKLGKAMELYRAMWDTRRNP), 316 to 350 (DVKICNNVIDALCFKKRIPEALEVFREISEKGPDP), 351 to 385 (NVVTYNSLLKHLCKIRRTEKVWELVEEMELKGGSC), 388 to 418 (NDVTFSYLLKYSQRSKDVDIVLERMAKNKCE), 420 to 454 (TSDLYNLMFRLYVQWDKEEKVREIWSEMERSGLGP), and 455 to 489 (DQRTYTIRIHGLHTKGKIGEALSYFQEMMSKGMVP). Residues 497-523 (LNQNKTKPRVEDKMLRSNLTSEESESD) are disordered.

It belongs to the PPR family. P subfamily.

This is Putative pentatricopeptide repeat-containing protein At3g15200 from Arabidopsis thaliana (Mouse-ear cress).